A 77-amino-acid polypeptide reads, in one-letter code: U18-lycotoxin-Ls1a (77 aa).

A signal peptide spans M1–A22. Positions E23–R34 are excised as a propeptide. 4 disulfide bridges follow: C36–C51, C43–C56, C50–C67, and C58–C65.

Belongs to the neurotoxin 02 (plectoxin) family. As to expression, expressed by the venom gland.

It localises to the secreted. The protein is U18-lycotoxin-Ls1a of Lycosa singoriensis (Wolf spider).